The chain runs to 117 residues: Transcription elongation factor A protein-like 8 (117 aa).

Residues 1–81 (MQKSCDENEG…PEEVIRGVDE (81 aa)) form a disordered region. A compositionally biased stretch (basic and acidic residues) spans 41 to 81 (NVREETDGSLRGEPAEPSPEPKEDTPARHLNPEEVIRGVDE). Residues 73-100 (EEVIRGVDELERLREEIRRVRNKFVLMH) are a coiled coil.

The protein belongs to the TFS-II family. TFA subfamily. Highly expressed in kidney. Moderately expressed in heart and lung. Low expression in brain and liver. Expression is up-regulated in nephrectomized kidney.

The protein localises to the nucleus. Functionally, may be involved in transcriptional regulation. This chain is Transcription elongation factor A protein-like 8 (Tceal8), found in Rattus norvegicus (Rat).